The chain runs to 425 residues: Keratin, type II cytoskeletal I (425 aa).

Residues 1 to 16 (FLEQQNKVLETKWKLL) form a coil 1A region. The region spanning 1–296 (FLEQQNKVLE…YMLEGEEGRI (296 aa)) is the IF rod domain. The tract at residues 17-37 (QEQGTKGTTKRANLDPLFEKY) is linker 1. Positions 38-129 (IADLKKYLDN…TRDAAELSQV (92 aa)) are coil 1B. Positions 130–153 (HDQVTDTSVVLTMDNNRDLNLDSI) are linker 12. Positions 154 to 292 (IKEVKCQYEQ…STYRYMLEGE (139 aa)) are coil 2. Residues 293 to 425 (EGRISGQIVN…STTSTTKKTY (133 aa)) form a tail region.

The protein belongs to the intermediate filament family. In terms of assembly, heterotetramer of two type I and two type II keratins.

In Xenopus laevis (African clawed frog), this protein is Keratin, type II cytoskeletal I.